A 264-amino-acid polypeptide reads, in one-letter code: Thiazole synthase (264 aa).

Residue Lys-98 is the Schiff-base intermediate with DXP of the active site. Residues Gly-159, 185–186 (AG), and 207–208 (AS) contribute to the 1-deoxy-D-xylulose 5-phosphate site. The disordered stretch occupies residues 243-264 (HFAEASSPPEGRAHLDPERPAF). Residues 253-264 (GRAHLDPERPAF) are compositionally biased toward basic and acidic residues.

It belongs to the ThiG family. As to quaternary structure, homotetramer. Forms heterodimers with either ThiH or ThiS.

The protein resides in the cytoplasm. The enzyme catalyses [ThiS sulfur-carrier protein]-C-terminal-Gly-aminoethanethioate + 2-iminoacetate + 1-deoxy-D-xylulose 5-phosphate = [ThiS sulfur-carrier protein]-C-terminal Gly-Gly + 2-[(2R,5Z)-2-carboxy-4-methylthiazol-5(2H)-ylidene]ethyl phosphate + 2 H2O + H(+). It participates in cofactor biosynthesis; thiamine diphosphate biosynthesis. Functionally, catalyzes the rearrangement of 1-deoxy-D-xylulose 5-phosphate (DXP) to produce the thiazole phosphate moiety of thiamine. Sulfur is provided by the thiocarboxylate moiety of the carrier protein ThiS. In vitro, sulfur can be provided by H(2)S. This is Thiazole synthase from Streptomyces avermitilis (strain ATCC 31267 / DSM 46492 / JCM 5070 / NBRC 14893 / NCIMB 12804 / NRRL 8165 / MA-4680).